A 212-amino-acid chain; its full sequence is Large ribosomal subunit protein uL4 (212 aa).

The span at 43–52 (NNRQGTASTK) shows a compositional bias: polar residues. The segment at 43-77 (NNRQGTASTKTRSEVRGGGRKPWRQKGTGRARAGS) is disordered. Residues 60–71 (GGRKPWRQKGTG) show a composition bias toward basic residues.

Belongs to the universal ribosomal protein uL4 family. As to quaternary structure, part of the 50S ribosomal subunit.

In terms of biological role, one of the primary rRNA binding proteins, this protein initially binds near the 5'-end of the 23S rRNA. It is important during the early stages of 50S assembly. It makes multiple contacts with different domains of the 23S rRNA in the assembled 50S subunit and ribosome. Forms part of the polypeptide exit tunnel. This Trichodesmium erythraeum (strain IMS101) protein is Large ribosomal subunit protein uL4.